We begin with the raw amino-acid sequence, 171 residues long: Peptide deformylase (171 aa).

Residues cysteine 91 and histidine 133 each contribute to the Fe cation site. The active site involves glutamate 134. Histidine 137 contributes to the Fe cation binding site.

The protein belongs to the polypeptide deformylase family. Fe(2+) is required as a cofactor.

It carries out the reaction N-terminal N-formyl-L-methionyl-[peptide] + H2O = N-terminal L-methionyl-[peptide] + formate. Functionally, removes the formyl group from the N-terminal Met of newly synthesized proteins. Requires at least a dipeptide for an efficient rate of reaction. N-terminal L-methionine is a prerequisite for activity but the enzyme has broad specificity at other positions. This chain is Peptide deformylase, found in Haemophilus ducreyi (strain 35000HP / ATCC 700724).